Reading from the N-terminus, the 525-residue chain is Potassium voltage-gated channel subfamily A member 3 (525 aa).

The tract at residues 1-23 (MTVVPGDHLLEPEAAGGGGGDPP) is disordered. Residues 1-184 (MTVVPGDHLL…EYPESSGPAR (184 aa)) are Cytoplasmic-facing. Residues 185–203 (GIAIVSVLVILISIVIFCL) traverse the membrane as a helical segment. At 204–244 (ETLPEFRDEKDYPASPSQDVFEAANNSTSGASSGASSFSDP) the chain is on the extracellular side. A glycan (N-linked (GlcNAc...) asparagine) is linked at N229. The helical transmembrane segment at 245–266 (FFVVETLCIIWFSFELLVRFFA) threads the bilayer. Residue C267 is the site of S-palmitoyl cysteine attachment. Residues 267–277 (CPSKATFSRNI) lie on the Cytoplasmic side of the membrane. The chain crosses the membrane as a helical span at residues 278–298 (MNLIDIVAIIPYFITLGTELA). The Extracellular segment spans residues 299–312 (ERQGNGQQAMSLAI). The chain crosses the membrane as a helical; Voltage-sensor span at residues 313 to 331 (LRVIRLVRVFRIFKLSRHS). The Cytoplasmic portion of the chain corresponds to 332-347 (KGLQILGQTLKASMRE). The helical transmembrane segment at 348-367 (LGLLIFFLFIGVILFSSAVY) threads the bilayer. The Extracellular segment spans residues 368 to 408 (FAEADDPSSGFNSIPDAFWWAVVTMTTVGYGDMHPVTIGGK). Positions 394–399 (TVGYGD) match the Selectivity filter motif. The helical transmembrane segment at 409–431 (IVGSLCAIAGVLTIALPVPVIVS) threads the bilayer. Residues 432-525 (NFNYFYHRET…VNIKKIFTDV (94 aa)) are Cytoplasmic-facing. Residues 432 to 525 (NFNYFYHRET…VNIKKIFTDV (94 aa)) are interaction with KCNE4. Y449 is subject to Phosphotyrosine. The residue at position 470 (S470) is a Phosphoserine; by PKA. The short motif at 523-525 (TDV) is the PDZ-binding element.

Belongs to the potassium channel family. A (Shaker) (TC 1.A.1.2) subfamily. Kv1.3/KCNA3 sub-subfamily. Homotetramer. Forms heterooligomers with KCNE4 which inhibits KCNA3 activity by impairing localization to the cell membrane. The stoichiometry of KCNA3 and KCNE4 in the heterooligomers are 4:1, 4:2, 4:3 or 4:4 respectively. Increasing the number of KCNE4 subunits steadily slows the activation KCNA3 and decreases its abundance at the cell membrane. However, a single subunit of KCNE4 is sufficient for the cooperative enhancement of the inactivating function of the channel. Interacts with SEC24D; this interaction is reduced in the presence of KCNE4. Interacts with DLG1, DLG2 and DLG4 via their PDZ domains. Post-translationally, phosphorylation on Tyr-449 inhibits its channel activity. In terms of processing, N-glycosylation promotes the cell surface expression.

It localises to the cell membrane. The catalysed reaction is K(+)(in) = K(+)(out). Its activity is regulated as follows. Activity is up-regulated by JAK2. Mediates the voltage-dependent potassium ion permeability of excitable membranes. Assuming opened or closed conformations in response to the voltage difference across the membrane, the protein forms a potassium-selective channel through which potassium ions may pass in accordance with their electrochemical gradient. The polypeptide is Potassium voltage-gated channel subfamily A member 3 (Kcna3) (Rattus norvegicus (Rat)).